The primary structure comprises 347 residues: NADH-ubiquinone oxidoreductase chain 2 (347 aa).

Transmembrane regions (helical) follow at residues 3–23, 25–45, 60–80, 96–116, 122–142, 153–173, 178–198, 200–220, 237–257, 274–294, and 323–343; these read PPIL…VLTS, HWLL…PILM, FLTQ…NLMF, GLVT…FWVP, ISLS…LSIL, LLIT…LNQT, ILAY…TYNP, LMIL…MLFM, LPLM…LPPL, DMII…YFYM, and IILL…TPMM.

The protein belongs to the complex I subunit 2 family. Core subunit of respiratory chain NADH dehydrogenase (Complex I) which is composed of 45 different subunits. Interacts with TMEM242.

The protein localises to the mitochondrion inner membrane. The catalysed reaction is a ubiquinone + NADH + 5 H(+)(in) = a ubiquinol + NAD(+) + 4 H(+)(out). Functionally, core subunit of the mitochondrial membrane respiratory chain NADH dehydrogenase (Complex I) which catalyzes electron transfer from NADH through the respiratory chain, using ubiquinone as an electron acceptor. Essential for the catalytic activity and assembly of complex I. In Halichoerus grypus (Gray seal), this protein is NADH-ubiquinone oxidoreductase chain 2.